The primary structure comprises 106 residues: Iron-sulfur cluster assembly protein CyaY (106 aa).

Belongs to the frataxin family.

Involved in iron-sulfur (Fe-S) cluster assembly. May act as a regulator of Fe-S biogenesis. This is Iron-sulfur cluster assembly protein CyaY from Shigella flexneri serotype 5b (strain 8401).